A 138-amino-acid polypeptide reads, in one-letter code: Small ribosomal subunit protein uS11c (138 aa).

The protein belongs to the universal ribosomal protein uS11 family. Part of the 30S ribosomal subunit.

It is found in the plastid. Its subcellular location is the chloroplast. The sequence is that of Small ribosomal subunit protein uS11c from Phalaenopsis aphrodite subsp. formosana (Moth orchid).